The chain runs to 283 residues: Pantothenate synthetase (283 aa).

30-37 (MGALHEGH) is an ATP binding site. Histidine 37 acts as the Proton donor in catalysis. Glutamine 61 is a (R)-pantoate binding site. Glutamine 61 is a beta-alanine binding site. 149–152 (GEKD) is a binding site for ATP. Glutamine 155 contributes to the (R)-pantoate binding site. ATP-binding positions include leucine 178 and 186–189 (RSSR).

The protein belongs to the pantothenate synthetase family. In terms of assembly, homodimer.

The protein localises to the cytoplasm. It carries out the reaction (R)-pantoate + beta-alanine + ATP = (R)-pantothenate + AMP + diphosphate + H(+). It functions in the pathway cofactor biosynthesis; (R)-pantothenate biosynthesis; (R)-pantothenate from (R)-pantoate and beta-alanine: step 1/1. Catalyzes the condensation of pantoate with beta-alanine in an ATP-dependent reaction via a pantoyl-adenylate intermediate. The sequence is that of Pantothenate synthetase from Christiangramia forsetii (strain DSM 17595 / CGMCC 1.15422 / KT0803) (Gramella forsetii).